A 142-amino-acid polypeptide reads, in one-letter code: Nucleoside diphosphate kinase (142 aa).

Positions 11, 59, 87, 93, 104, and 114 each coordinate ATP. H117 serves as the catalytic Pros-phosphohistidine intermediate.

This sequence belongs to the NDK family. In terms of assembly, homotetramer. The cofactor is Mg(2+).

It localises to the cytoplasm. The catalysed reaction is a 2'-deoxyribonucleoside 5'-diphosphate + ATP = a 2'-deoxyribonucleoside 5'-triphosphate + ADP. It catalyses the reaction a ribonucleoside 5'-diphosphate + ATP = a ribonucleoside 5'-triphosphate + ADP. Functionally, major role in the synthesis of nucleoside triphosphates other than ATP. The ATP gamma phosphate is transferred to the NDP beta phosphate via a ping-pong mechanism, using a phosphorylated active-site intermediate. In Pectobacterium atrosepticum (strain SCRI 1043 / ATCC BAA-672) (Erwinia carotovora subsp. atroseptica), this protein is Nucleoside diphosphate kinase.